We begin with the raw amino-acid sequence, 366 residues long: Dual-specificity RNA methyltransferase RlmN (366 aa).

The Proton acceptor role is filled by Glu91. In terms of domain architecture, Radical SAM core spans 97–333; that stretch reads EDDRGTLCVS…TTVRKTRGED (237 aa). Cys104 and Cys338 are disulfide-bonded. Cys111, Cys115, and Cys118 together coordinate [4Fe-4S] cluster. Residues 164–165, Ser196, 218–220, and Asn295 each bind S-adenosyl-L-methionine; these read GE and SLH. Cys338 (S-methylcysteine intermediate) is an active-site residue.

Belongs to the radical SAM superfamily. RlmN family. Requires [4Fe-4S] cluster as cofactor.

Its subcellular location is the cytoplasm. It carries out the reaction adenosine(2503) in 23S rRNA + 2 reduced [2Fe-2S]-[ferredoxin] + 2 S-adenosyl-L-methionine = 2-methyladenosine(2503) in 23S rRNA + 5'-deoxyadenosine + L-methionine + 2 oxidized [2Fe-2S]-[ferredoxin] + S-adenosyl-L-homocysteine. The enzyme catalyses adenosine(37) in tRNA + 2 reduced [2Fe-2S]-[ferredoxin] + 2 S-adenosyl-L-methionine = 2-methyladenosine(37) in tRNA + 5'-deoxyadenosine + L-methionine + 2 oxidized [2Fe-2S]-[ferredoxin] + S-adenosyl-L-homocysteine. In terms of biological role, specifically methylates position 2 of adenine 2503 in 23S rRNA and position 2 of adenine 37 in tRNAs. m2A2503 modification seems to play a crucial role in the proofreading step occurring at the peptidyl transferase center and thus would serve to optimize ribosomal fidelity. This chain is Dual-specificity RNA methyltransferase RlmN, found in Laribacter hongkongensis (strain HLHK9).